Consider the following 220-residue polypeptide: Iron-sulfur cluster repair protein YtfE (220 aa).

Belongs to the RIC family. YtfE subfamily. In terms of assembly, homodimer.

The protein resides in the cytoplasm. Functionally, di-iron-containing protein involved in the repair of iron-sulfur clusters damaged by oxidative and nitrosative stress conditions. In Escherichia coli O157:H7, this protein is Iron-sulfur cluster repair protein YtfE.